The following is a 226-amino-acid chain: MSFVESWRFAGARRRRQVTPGPATRPGYSDYTQGDSWGEGEGDEDEGCDQVARDLRAEFSARASSETKRAPLLPRVGDGSPVLPDKRNGIFPATAAKRTQARRWPIQALSILCSLLFAVLLAFLLAIAYMIVKELHAENLKNEDDIHTGLLGFWSLLIISLTAGLSCCSFSWTVTYFDSFEPGMFPPTPLSPARFKKLTGHSFHMGYSMAILNGIVAALTVAWCLM.

The segment at 1–49 (MSFVESWRFAGARRRRQVTPGPATRPGYSDYTQGDSWGEGEGDEDEGCD) is disordered. Residues Ser-2 and Ser-36 each carry the phosphoserine modification. Residues 38–48 (GEGEGDEDEGC) are compositionally biased toward acidic residues. Ser-60, Ser-65, and Ser-80 each carry phosphoserine. A run of 3 helical transmembrane segments spans residues 111–131 (ILCS…AYMI), 150–170 (LLGF…CCSF), and 205–225 (MGYS…AWCL).

It belongs to the ARL6IP6 family.

Its subcellular location is the nucleus inner membrane. The chain is ADP-ribosylation factor-like protein 6-interacting protein 6 (Arl6ip6) from Mus musculus (Mouse).